The primary structure comprises 208 residues: FMN-dependent NADH:quinone oxidoreductase 1 (208 aa).

FMN is bound at residue 17–19; the sequence is SVS.

It belongs to the azoreductase type 1 family. In terms of assembly, homodimer. FMN serves as cofactor.

The catalysed reaction is 2 a quinone + NADH + H(+) = 2 a 1,4-benzosemiquinone + NAD(+). It carries out the reaction N,N-dimethyl-1,4-phenylenediamine + anthranilate + 2 NAD(+) = 2-(4-dimethylaminophenyl)diazenylbenzoate + 2 NADH + 2 H(+). In terms of biological role, quinone reductase that provides resistance to thiol-specific stress caused by electrophilic quinones. Its function is as follows. Also exhibits azoreductase activity. Catalyzes the reductive cleavage of the azo bond in aromatic azo compounds to the corresponding amines. This Listeria innocua serovar 6a (strain ATCC BAA-680 / CLIP 11262) protein is FMN-dependent NADH:quinone oxidoreductase 1.